A 274-amino-acid chain; its full sequence is Large ribosomal subunit protein uL2 (274 aa).

The disordered stretch occupies residues 195–274; the sequence is VGNSDHGLER…SKYIIERRKK (80 aa). Composition is skewed to basic residues over residues 207 to 220 and 244 to 264; these read KAGRSRWQGRRPRN and PRSRKGLYAKGLKTRAPKKQS.

This sequence belongs to the universal ribosomal protein uL2 family. As to quaternary structure, part of the 50S ribosomal subunit. Forms a bridge to the 30S subunit in the 70S ribosome.

Functionally, one of the primary rRNA binding proteins. Required for association of the 30S and 50S subunits to form the 70S ribosome, for tRNA binding and peptide bond formation. It has been suggested to have peptidyltransferase activity; this is somewhat controversial. Makes several contacts with the 16S rRNA in the 70S ribosome. This is Large ribosomal subunit protein uL2 from Bacteroides thetaiotaomicron (strain ATCC 29148 / DSM 2079 / JCM 5827 / CCUG 10774 / NCTC 10582 / VPI-5482 / E50).